Reading from the N-terminus, the 78-residue chain is Small integral membrane protein 1 (78 aa).

Met1 is subject to N-acetylmethionine. The segment at Met1–Ser22 is disordered. Topologically, residues Met1 to Gly48 are cytoplasmic. Residues Ser6, Ser17, Ser22, and Ser27 each carry the phosphoserine modification. Residues Ser11–Val21 show a composition bias toward basic and acidic residues. Residues Ile49–Ile69 form a helical; Signal-anchor for type II membrane protein membrane-spanning segment. Residues Thr70–Lys78 lie on the Extracellular side of the membrane.

The protein belongs to the SMIM1 family. Homooligomer; disulfide-linked.

It is found in the cell membrane. Regulator of red blood cell formation. This chain is Small integral membrane protein 1, found in Mus musculus (Mouse).